The primary structure comprises 252 residues: Chitooligosaccharide deacetylase (252 aa).

Positions 61 and 125 each coordinate Mg(2+).

This sequence belongs to the YdjC deacetylase family. ChbG subfamily. Homodimer. The cofactor is Mg(2+).

The protein localises to the cytoplasm. The enzyme catalyses N,N'-diacetylchitobiose + H2O = N-acetyl-beta-D-glucosaminyl-(1-&gt;4)-D-glucosamine + acetate. It carries out the reaction diacetylchitobiose-6'-phosphate + H2O = N'-monoacetylchitobiose-6'-phosphate + acetate. The protein operates within glycan degradation; chitin degradation. Its function is as follows. Involved in the degradation of chitin. ChbG is essential for growth on the acetylated chitooligosaccharides chitobiose and chitotriose but is dispensable for growth on cellobiose and chitosan dimer, the deacetylated form of chitobiose. Deacetylation of chitobiose-6-P and chitotriose-6-P is necessary for both the activation of the chb promoter by the regulatory protein ChbR and the hydrolysis of phosphorylated beta-glucosides by the phospho-beta-glucosidase ChbF. Catalyzes the removal of only one acetyl group from chitobiose-6-P to yield monoacetylchitobiose-6-P, the inducer of ChbR and the substrate of ChbF. In Salmonella paratyphi C (strain RKS4594), this protein is Chitooligosaccharide deacetylase.